Reading from the N-terminus, the 302-residue chain is Sulfate adenylyltransferase subunit 2 (302 aa).

Belongs to the PAPS reductase family. CysD subfamily. Heterodimer composed of CysD, the smaller subunit, and CysN.

It catalyses the reaction sulfate + ATP + H(+) = adenosine 5'-phosphosulfate + diphosphate. Its pathway is sulfur metabolism; hydrogen sulfide biosynthesis; sulfite from sulfate: step 1/3. Its function is as follows. With CysN forms the ATP sulfurylase (ATPS) that catalyzes the adenylation of sulfate producing adenosine 5'-phosphosulfate (APS) and diphosphate, the first enzymatic step in sulfur assimilation pathway. APS synthesis involves the formation of a high-energy phosphoric-sulfuric acid anhydride bond driven by GTP hydrolysis by CysN coupled to ATP hydrolysis by CysD. In Psychromonas ingrahamii (strain DSM 17664 / CCUG 51855 / 37), this protein is Sulfate adenylyltransferase subunit 2.